Consider the following 141-residue polypeptide: Large ribosomal subunit protein uL11 (141 aa).

Belongs to the universal ribosomal protein uL11 family. As to quaternary structure, part of the ribosomal stalk of the 50S ribosomal subunit. Interacts with L10 and the large rRNA to form the base of the stalk. L10 forms an elongated spine to which L12 dimers bind in a sequential fashion forming a multimeric L10(L12)X complex. One or more lysine residues are methylated.

In terms of biological role, forms part of the ribosomal stalk which helps the ribosome interact with GTP-bound translation factors. This is Large ribosomal subunit protein uL11 from Pelodictyon phaeoclathratiforme (strain DSM 5477 / BU-1).